The following is a 327-amino-acid chain: Mitochondrial thiamine pyrophosphate carrier 1 (327 aa).

Solcar repeat units follow at residues 13-114, 126-214, and 222-317; these read GSKL…AAQL, PAAA…LRAP, and FWGG…VLRA. 6 helical membrane passes run 16 to 36, 95 to 111, 132 to 152, 189 to 209, 223 to 245, and 292 to 309; these read LQVV…IAPL, LLYI…YRSA, FVAG…LDLL, GIGP…AAYE, WGGQ…VFPL, and GLTV…VTMW.

It belongs to the mitochondrial carrier (TC 2.A.29) family.

It is found in the mitochondrion inner membrane. Its function is as follows. Mitochondrial transporter that mediates uptake of thiamine pyrophosphate (ThPP) into mitochondria. This chain is Mitochondrial thiamine pyrophosphate carrier 1 (TPC1), found in Pyricularia oryzae (strain 70-15 / ATCC MYA-4617 / FGSC 8958) (Rice blast fungus).